The following is a 108-amino-acid chain: Small ribosomal subunit protein uS17 (108 aa).

Belongs to the universal ribosomal protein uS17 family. As to quaternary structure, part of the 30S ribosomal subunit.

One of the primary rRNA binding proteins, it binds specifically to the 5'-end of 16S ribosomal RNA. The sequence is that of Small ribosomal subunit protein uS17 from Methanocorpusculum labreanum (strain ATCC 43576 / DSM 4855 / Z).